A 169-amino-acid polypeptide reads, in one-letter code: Flagellar biosynthetic protein FliU (169 aa).

The protein belongs to the FliB family.

In terms of biological role, required for the secretion of flagellin and expression of motility. This is Flagellar biosynthetic protein FliU (fliU) from Salmonella muenchen.